A 212-amino-acid polypeptide reads, in one-letter code: Kynurenine formamidase (212 aa).

Tryptophan 18 contributes to the substrate binding site. The Zn(2+) site is built by histidine 48, histidine 52, and aspartate 54. Histidine 58 (proton donor/acceptor) is an active-site residue. Positions 160 and 172 each coordinate Zn(2+).

The protein belongs to the Cyclase 1 superfamily. KynB family. Homodimer. It depends on Zn(2+) as a cofactor.

The catalysed reaction is N-formyl-L-kynurenine + H2O = L-kynurenine + formate + H(+). The protein operates within amino-acid degradation; L-tryptophan degradation via kynurenine pathway; L-kynurenine from L-tryptophan: step 2/2. Catalyzes the hydrolysis of N-formyl-L-kynurenine to L-kynurenine, the second step in the kynurenine pathway of tryptophan degradation. This is Kynurenine formamidase from Paraburkholderia xenovorans (strain LB400).